We begin with the raw amino-acid sequence, 298 residues long: Bifunctional protein FolD (298 aa).

Residues 165–167, S194, and I235 each bind NADP(+); that span reads GRG.

The protein belongs to the tetrahydrofolate dehydrogenase/cyclohydrolase family. In terms of assembly, homodimer.

The enzyme catalyses (6R)-5,10-methylene-5,6,7,8-tetrahydrofolate + NADP(+) = (6R)-5,10-methenyltetrahydrofolate + NADPH. It catalyses the reaction (6R)-5,10-methenyltetrahydrofolate + H2O = (6R)-10-formyltetrahydrofolate + H(+). It functions in the pathway one-carbon metabolism; tetrahydrofolate interconversion. Its function is as follows. Catalyzes the oxidation of 5,10-methylenetetrahydrofolate to 5,10-methenyltetrahydrofolate and then the hydrolysis of 5,10-methenyltetrahydrofolate to 10-formyltetrahydrofolate. In Amoebophilus asiaticus (strain 5a2), this protein is Bifunctional protein FolD.